Here is a 157-residue protein sequence, read N- to C-terminus: uncharacterized protein (157 aa).

Residue Lys115 forms an Isoglutamyl lysine isopeptide (Lys-Gln) (interchain with Q-Cter in protein Pup) linkage.

This is an uncharacterized protein from Mycolicibacterium smegmatis (strain ATCC 700084 / mc(2)155) (Mycobacterium smegmatis).